We begin with the raw amino-acid sequence, 284 residues long: Bifunctional protein FolD (284 aa).

NADP(+) is bound by residues 164–166 (GRG), Ser-189, and Ile-230.

The protein belongs to the tetrahydrofolate dehydrogenase/cyclohydrolase family. In terms of assembly, homodimer.

The catalysed reaction is (6R)-5,10-methylene-5,6,7,8-tetrahydrofolate + NADP(+) = (6R)-5,10-methenyltetrahydrofolate + NADPH. It catalyses the reaction (6R)-5,10-methenyltetrahydrofolate + H2O = (6R)-10-formyltetrahydrofolate + H(+). The protein operates within one-carbon metabolism; tetrahydrofolate interconversion. Catalyzes the oxidation of 5,10-methylenetetrahydrofolate to 5,10-methenyltetrahydrofolate and then the hydrolysis of 5,10-methenyltetrahydrofolate to 10-formyltetrahydrofolate. The polypeptide is Bifunctional protein FolD (Desulforamulus reducens (strain ATCC BAA-1160 / DSM 100696 / MI-1) (Desulfotomaculum reducens)).